We begin with the raw amino-acid sequence, 496 residues long: Glycerol kinase (496 aa).

ADP is bound at residue Thr12. ATP contacts are provided by Thr12, Thr13, and Ser14. A sn-glycerol 3-phosphate-binding site is contributed by Thr12. Arg16 contributes to the ADP binding site. Residues Arg82, Glu83, and Tyr134 each coordinate sn-glycerol 3-phosphate. The glycerol site is built by Arg82, Glu83, and Tyr134. The residue at position 230 (His230) is a Phosphohistidine; by HPr. Asp244 provides a ligand contact to sn-glycerol 3-phosphate. Positions 244 and 245 each coordinate glycerol. The ADP site is built by Thr266 and Gly309. Positions 266, 309, 313, and 410 each coordinate ATP. Positions 410 and 414 each coordinate ADP.

It belongs to the FGGY kinase family. Homotetramer and homodimer (in equilibrium). Post-translationally, the phosphoenolpyruvate-dependent sugar phosphotransferase system (PTS), including enzyme I, and histidine-containing protein (HPr) are required for the phosphorylation, which leads to the activation of the enzyme.

It carries out the reaction glycerol + ATP = sn-glycerol 3-phosphate + ADP + H(+). It functions in the pathway polyol metabolism; glycerol degradation via glycerol kinase pathway; sn-glycerol 3-phosphate from glycerol: step 1/1. Activated by phosphorylation and inhibited by fructose 1,6-bisphosphate (FBP). Functionally, key enzyme in the regulation of glycerol uptake and metabolism. Catalyzes the phosphorylation of glycerol to yield sn-glycerol 3-phosphate. This chain is Glycerol kinase, found in Geobacillus sp. (strain WCH70).